A 515-amino-acid polypeptide reads, in one-letter code: Maturase K (515 aa).

The protein belongs to the intron maturase 2 family. MatK subfamily.

It is found in the plastid. The protein resides in the chloroplast. Its function is as follows. Usually encoded in the trnK tRNA gene intron. Probably assists in splicing its own and other chloroplast group II introns. This chain is Maturase K, found in Pinus elliottii (Slash pine).